The following is a 341-amino-acid chain: L-threonine 3-dehydrogenase (341 aa).

Zn(2+) is bound at residue C38. Residues T40 and H43 each act as charge relay system in the active site. H63, E64, C93, C96, C99, and C107 together coordinate Zn(2+). Residues I175, D195, R200, 262 to 264 (LGI), and 286 to 287 (IY) each bind NAD(+).

The protein belongs to the zinc-containing alcohol dehydrogenase family. In terms of assembly, homotetramer. The cofactor is Zn(2+).

The protein localises to the cytoplasm. The catalysed reaction is L-threonine + NAD(+) = (2S)-2-amino-3-oxobutanoate + NADH + H(+). It participates in amino-acid degradation; L-threonine degradation via oxydo-reductase pathway; glycine from L-threonine: step 1/2. Functionally, catalyzes the NAD(+)-dependent oxidation of L-threonine to 2-amino-3-ketobutyrate. The polypeptide is L-threonine 3-dehydrogenase (Shewanella baltica (strain OS185)).